The following is a 202-amino-acid chain: MAFELPKLPYPANALEPHIDEATMNIHHGKHHNTYVTKLNAALEGHSALAEKSIEALVSDLDAVPENIRTAVRNNGGGHANHTLFWQILSPNGGGAPTGELADAINAEFGSFDQFKEKFADAAANRFGSGWAWLVVNDGKLEITSTPNQDTPLMEGKTPILGLDVWEHAYYLNYQNRRPDYISAFWNVVNWDEVAKRYNEAK.

Residue His27 participates in Mn(2+) binding. Residues Thr34 and Thr70 each carry the phosphothreonine modification. The Mn(2+) site is built by His82, Asp164, and His168.

This sequence belongs to the iron/manganese superoxide dismutase family. As to quaternary structure, homodimer. Mn(2+) serves as cofactor.

It carries out the reaction 2 superoxide + 2 H(+) = H2O2 + O2. In terms of biological role, destroys superoxide anion radicals which are normally produced within the cells and which are toxic to biological systems. In Halalkalibacterium halodurans (strain ATCC BAA-125 / DSM 18197 / FERM 7344 / JCM 9153 / C-125) (Bacillus halodurans), this protein is Superoxide dismutase [Mn] (sodA).